We begin with the raw amino-acid sequence, 278 residues long: HTH-type transcriptional activator RhaS (278 aa).

The HTH araC/xylS-type domain maps to 174–272 (NQLLAWLEDH…DWSPRDIRQG (99 aa)). 2 consecutive DNA-binding regions (H-T-H motif) follow at residues 191-212 (EEVA…KQQT) and 239-262 (VTDI…RREF).

Binds DNA as a dimer.

It is found in the cytoplasm. Functionally, activates expression of the rhaBAD and rhaT operons. The sequence is that of HTH-type transcriptional activator RhaS from Klebsiella pneumoniae (strain 342).